The chain runs to 744 residues: Eukaryotic translation initiation factor 3 subunit B (744 aa).

A disordered region spans residues 1–21 (MAPSFDHLPDPEEDEYDEEEL). A compositionally biased stretch (acidic residues) spans 11-21 (PEEDEYDEEEL). The RRM domain maps to 40 to 126 (TFVVIDGLPE…HTLRVNKLTD (87 aa)). 4 WD repeats span residues 193-232 (DRQH…RQKR), 234-290 (AHPF…PLRS), 307-348 (PIKR…LLDK), and 577-622 (ADHY…LREE).

It belongs to the eIF-3 subunit B family. Component of the eukaryotic translation initiation factor 3 (eIF-3) complex.

It is found in the cytoplasm. RNA-binding component of the eukaryotic translation initiation factor 3 (eIF-3) complex, which is involved in protein synthesis of a specialized repertoire of mRNAs and, together with other initiation factors, stimulates binding of mRNA and methionyl-tRNAi to the 40S ribosome. The eIF-3 complex specifically targets and initiates translation of a subset of mRNAs involved in cell proliferation. The polypeptide is Eukaryotic translation initiation factor 3 subunit B (prt1) (Botryotinia fuckeliana (strain B05.10) (Noble rot fungus)).